We begin with the raw amino-acid sequence, 388 residues long: tRNA (guanine(26)-N(2))-dimethyltransferase (388 aa).

Positions 4-383 (KTIVEGTTKV…APITEIKEII (380 aa)) constitute a Trm1 methyltransferase domain. S-adenosyl-L-methionine is bound by residues arginine 41, arginine 78, aspartate 94, and alanine 123. 4 residues coordinate Zn(2+): cysteine 251, cysteine 254, cysteine 271, and cysteine 274.

This sequence belongs to the class I-like SAM-binding methyltransferase superfamily. Trm1 family.

The catalysed reaction is guanosine(26) in tRNA + 2 S-adenosyl-L-methionine = N(2)-dimethylguanosine(26) in tRNA + 2 S-adenosyl-L-homocysteine + 2 H(+). Its function is as follows. Dimethylates a single guanine residue at position 26 of a number of tRNAs using S-adenosyl-L-methionine as donor of the methyl groups. The sequence is that of tRNA (guanine(26)-N(2))-dimethyltransferase from Methanosarcina barkeri (strain Fusaro / DSM 804).